Here is a 465-residue protein sequence, read N- to C-terminus: Fusarisetin A cluster transcription factor fsa5 (465 aa).

Positions 13–47 form a DNA-binding region, zn(2)-C6 fungal-type; it reads CDRCRSHKLKCTVAPENTRSGSSRCTRCIRAQVTC. Residues 58–88 are disordered; it reads STNVKKADLRSGTNGQETTSMQASTIVPGSP. Positions 68–84 are enriched in polar residues; sequence SGTNGQETTSMQASTIV.

The protein localises to the nucleus. Functionally, transcription activator that specifically regulates the expression of the gene cluster that mediates the biosynthesis of fusarisetin A. The protein is Fusarisetin A cluster transcription factor fsa5 of Fusarium sp. (strain FN080326).